Here is a 539-residue protein sequence, read N- to C-terminus: Phosphoenolpyruvate carboxykinase (ATP) (539 aa).

3 residues coordinate substrate: Arg64, Tyr206, and Lys212. ATP-binding positions include Lys212, His231, and 247 to 255 (GLSGTGKTT). Mn(2+) contacts are provided by Lys212 and His231. Asp268 is a binding site for Mn(2+). Residues Glu296, Arg332, 448–449 (RI), and Thr454 contribute to the ATP site. Arg332 contributes to the substrate binding site.

This sequence belongs to the phosphoenolpyruvate carboxykinase (ATP) family. Monomer. Mn(2+) is required as a cofactor.

The protein resides in the cytoplasm. The catalysed reaction is oxaloacetate + ATP = phosphoenolpyruvate + ADP + CO2. It functions in the pathway carbohydrate biosynthesis; gluconeogenesis. Its function is as follows. Involved in the gluconeogenesis. Catalyzes the conversion of oxaloacetate (OAA) to phosphoenolpyruvate (PEP) through direct phosphoryl transfer between the nucleoside triphosphate and OAA. The sequence is that of Phosphoenolpyruvate carboxykinase (ATP) from Pectobacterium carotovorum subsp. carotovorum (strain PC1).